Consider the following 497-residue polypeptide: NADH-quinone oxidoreductase subunit N (497 aa).

Transmembrane regions (helical) follow at residues 12–32 (MAPE…DLAL), 40–60 (PLAW…AAMI), 80–100 (AFKF…AEWA), 116–136 (LFAL…TLFV), 166–186 (VING…VFGL), 208–228 (LALA…TVPF), 240–260 (PVPA…ALLL), 284–304 (MQPI…VVAL), 316–336 (SGIA…WAMI), 341–361 (MYLL…AHIV), 383–403 (AAAL…AGFI), 430–450 (TVIS…RPTF), and 457–477 (LPAG…AIGW).

Belongs to the complex I subunit 2 family. As to quaternary structure, NDH-1 is composed of 14 different subunits. Subunits NuoA, H, J, K, L, M, N constitute the membrane sector of the complex.

The protein localises to the cell membrane. It carries out the reaction a quinone + NADH + 5 H(+)(in) = a quinol + NAD(+) + 4 H(+)(out). Its function is as follows. NDH-1 shuttles electrons from NADH, via FMN and iron-sulfur (Fe-S) centers, to quinones in the respiratory chain. The immediate electron acceptor for the enzyme in this species is believed to be a menaquinone. Couples the redox reaction to proton translocation (for every two electrons transferred, four hydrogen ions are translocated across the cytoplasmic membrane), and thus conserves the redox energy in a proton gradient. The protein is NADH-quinone oxidoreductase subunit N of Geobacillus kaustophilus (strain HTA426).